The sequence spans 63 residues: MANAAKTIKVTLVKSTIGILPKHKDCVRGLGLRKINHTVEVEDTAAVRGMINKVNYLVKVEGE.

The protein belongs to the universal ribosomal protein uL30 family. In terms of assembly, part of the 50S ribosomal subunit.

The protein is Large ribosomal subunit protein uL30 of Hahella chejuensis (strain KCTC 2396).